A 316-amino-acid chain; its full sequence is Coiled-coil domain-containing protein 42 (316 aa).

Coiled-coil stretches lie at residues 43–151 and 182–236; these read RLLE…EYSI and HHDL…SDVI.

It belongs to the CFAP73 family. As to quaternary structure, interacts with ODF1 and ODF2. Interacts with CCDC38. Interacts with CCDC146. Interacts with CFAP53.

The protein localises to the cytoplasm. The protein resides in the perinuclear region. It localises to the cytoskeleton. It is found in the cell projection. Its subcellular location is the cilium. The protein localises to the flagellum. The protein resides in the microtubule organizing center. It localises to the centrosome. In terms of biological role, essential for male fertility. Required for sperm development. This chain is Coiled-coil domain-containing protein 42, found in Bos taurus (Bovine).